The following is a 208-amino-acid chain: Ribosomal RNA small subunit methyltransferase J (208 aa).

Residues 54 to 55, 70 to 71, and aspartate 122 each bind S-adenosyl-L-methionine; these read RD and ER.

Belongs to the methyltransferase superfamily. RsmJ family.

The protein resides in the cytoplasm. It catalyses the reaction guanosine(1516) in 16S rRNA + S-adenosyl-L-methionine = N(2)-methylguanosine(1516) in 16S rRNA + S-adenosyl-L-homocysteine + H(+). In terms of biological role, specifically methylates the guanosine in position 1516 of 16S rRNA. The polypeptide is Ribosomal RNA small subunit methyltransferase J (Agrobacterium fabrum (strain C58 / ATCC 33970) (Agrobacterium tumefaciens (strain C58))).